The chain runs to 115 residues: Holo-[acyl-carrier-protein] synthase (115 aa).

Residues Asp5 and Glu50 each coordinate Mg(2+).

This sequence belongs to the P-Pant transferase superfamily. AcpS family. Mg(2+) is required as a cofactor.

The protein resides in the cytoplasm. It catalyses the reaction apo-[ACP] + CoA = holo-[ACP] + adenosine 3',5'-bisphosphate + H(+). In terms of biological role, transfers the 4'-phosphopantetheine moiety from coenzyme A to a Ser of acyl-carrier-protein. In Campylobacter fetus subsp. fetus (strain 82-40), this protein is Holo-[acyl-carrier-protein] synthase.